We begin with the raw amino-acid sequence, 752 residues long: MKRNGFVPSNSVGRRGIPSNSTSSAIASAGGAVVWTGAGAGRVRARPEQVSVGPGTMSCVTDPREEHRLIAEEIEEARWRYYVLDSPTIDDADFDRRMRRLEALEEEFPELRTPDSPTQTVGGAVSTDFTSHPHLRRMESLDNAFSVEEVEAWYARLRRDGVEDPALLCELKVDGLAINLLYEEGRLVRALTRGDGTTGEDVTSNVKTITSVPHRLTGTDEFPVPALVEVRGEVFLPVEAFERLNESLLEAGKAPFANPRNSAAGSLRQKDPRITASRALGMVCHGIGERRGFEPQAQSHAYDALAAWGLPTSDQVRVVSTLKGVEGYIENAGARRHTIVPYEIDGVVVKVDDVALQRRLGSTSRAPRWAIAFKYPPEEVNAKLLEIRVNVGRTGRVTPYAVMEPTKVAGSTVENATLHNFYEVERKDVRPGGPGDPGDTVILRKAGDVIPEILGPVLALRPEGLQPWVPPTTCPSCGTPLVEQKEGDKDRRCPNHEKCPGQLRERVFFVASRNAFDIEGLGYEAAVALLDAEVIANEGDVFDLDAAALLRAPLFTRAPKKDEDGPQLSANGQRLLDNLDKAKQVPLWRVLVALSIRHVGPKAGRALATEFGSMAAIRAATEEQLAAAEGVGPTIAEAVIEWFKEPWHVEIVDKWERAGVTMADERDESTPRTLAGLTVVVTGSLVDFSRDSAKEAILSRGGKAAGSVSKKTDYVVVGENAGSKADKAEQLGVPVLDEAGFKTLLDGGPAAL.

Positions 1 to 25 (MKRNGFVPSNSVGRRGIPSNSTSSA) are disordered. Residues 91-95 (DADFD), 140-141 (SL), and E170 each bind NAD(+). Residue K172 is the N6-AMP-lysine intermediate of the active site. 4 residues coordinate NAD(+): R193, E233, K350, and K374. Positions 474, 477, 493, and 499 each coordinate Zn(2+). Residues 669-752 (STPRTLAGLT…TLLDGGPAAL (84 aa)) form the BRCT domain.

The protein belongs to the NAD-dependent DNA ligase family. LigA subfamily. Mg(2+) serves as cofactor. Mn(2+) is required as a cofactor.

The enzyme catalyses NAD(+) + (deoxyribonucleotide)n-3'-hydroxyl + 5'-phospho-(deoxyribonucleotide)m = (deoxyribonucleotide)n+m + AMP + beta-nicotinamide D-nucleotide.. DNA ligase that catalyzes the formation of phosphodiester linkages between 5'-phosphoryl and 3'-hydroxyl groups in double-stranded DNA using NAD as a coenzyme and as the energy source for the reaction. It is essential for DNA replication and repair of damaged DNA. The chain is DNA ligase from Nocardioides sp. (strain ATCC BAA-499 / JS614).